A 335-amino-acid chain; its full sequence is Selenide, water dikinase (335 aa).

Sec-7 is a catalytic residue. A non-standard amino acid (selenocysteine) is located at residue Sec-7. Residues Lys-10 and 36-38 (LGD) each bind ATP. Asp-39 is a binding site for Mg(2+). ATP is bound by residues Asp-55, Asp-78, and 126 to 128 (GHT). Asp-78 lines the Mg(2+) pocket. Asp-232 contributes to the Mg(2+) binding site.

This sequence belongs to the selenophosphate synthase 1 family. Class I subfamily. Homodimer. The cofactor is Mg(2+).

The enzyme catalyses hydrogenselenide + ATP + H2O = selenophosphate + AMP + phosphate + 2 H(+). In terms of biological role, synthesizes selenophosphate from selenide and ATP. The protein is Selenide, water dikinase of Methanococcus maripaludis (strain DSM 14266 / JCM 13030 / NBRC 101832 / S2 / LL).